Reading from the N-terminus, the 88-residue chain is Kunitz-type U15-theraphotoxin-Hhn1c (88 aa).

A signal peptide spans 1-27 (MGTARFLRAVLLLSVLLMVTFPALLSA). A propeptide spanning residues 28–33 (EHHDGR) is cleaved from the precursor. Residues 37–85 (CRLPSDSGDCLRFFEVWYFDGTTCTKFVYGGYGGNDNRFPTEKACMKRC) enclose the BPTI/Kunitz inhibitor domain. 2 disulfide bridges follow: cysteine 37/cysteine 85 and cysteine 60/cysteine 81.

This sequence belongs to the venom Kunitz-type family. 03 (sub-Kunitz) subfamily. As to expression, expressed by the venom gland.

Its subcellular location is the secreted. Functionally, serine protease inhibitor that inhibits trypsin at a molar ratio of 1:1. The protein is Kunitz-type U15-theraphotoxin-Hhn1c of Cyriopagopus hainanus (Chinese bird spider).